We begin with the raw amino-acid sequence, 1300 residues long: Nephrocystin-3 (1300 aa).

Residues 82-183 (KNNEVASMQK…LQRLQAQGIQ (102 aa)) are a coiled coil. 9 TPR repeats span residues 443 to 476 (TMEDDDYGDVLWDVHDEQEQMEAYQQASQSICEL), 916 to 949 (ADLYETLGRFLKDLGLLSQAVTPLQRSLEIRETA), 958 to 991 (AQSLHQLAGVYMQSKKFGNAEQLYKQALEISENA), 1000 to 1033 (ARELDALAVLYQKQNKFEQAEQLRKKSLKIRQKS), 1066 to 1099 (ARTLNELGVLYYLQNNLETAETFLKRSLEMRERV), 1108 to 1141 (AQSINNLAALYNEKKQYDKAEELYERALDIRRRA), 1150 to 1183 (AYTVKHLAVLYKRKGKLDKAVPLYELAVDIRQKS), 1192 to 1225 (ATALVNLAVLYCQMKKQDDALPLYERAMKIYEDS), and 1234 to 1267 (GETLKNLAVLRYEEGDYEKAAELYKRAMEIKETE). The disordered stretch occupies residues 1268 to 1288 (TSVLGAKAPSGHSSSGGDTYS). The segment covering 1278-1288 (GHSSSGGDTYS) has biased composition (polar residues).

It localises to the cell projection. Its subcellular location is the cilium. Functionally, required for normal ciliary development and function. Inhibits disheveled-1-induced canonical Wnt-signaling activity and may also play a role in the control of non-canonical Wnt signaling that regulates planar cell polarity. Probably acts as a molecular switch between different Wnt signaling pathways. Required for proper convergent extension cell movements. This chain is Nephrocystin-3 (nphp3), found in Xenopus laevis (African clawed frog).